The chain runs to 283 residues: Isochorismatase domain-containing protein 1 (283 aa).

This sequence belongs to the isochorismatase family.

This is Isochorismatase domain-containing protein 1 (isoc1) from Salmo salar (Atlantic salmon).